The sequence spans 505 residues: Oxidative stress-induced growth inhibitor 2 (505 aa).

Belongs to the OKL38 family. The cofactor is NADPH. In terms of tissue distribution, ubiquitous. Expressed at higher levels in testis and ovary.

The protein resides in the midbody. Functionally, monooxygenase catalytic activity. May be involved in meiosis or the maturation of germ cells. This Homo sapiens (Human) protein is Oxidative stress-induced growth inhibitor 2.